Consider the following 122-residue polypeptide: Large ribosomal subunit protein uL14 (122 aa).

It belongs to the universal ribosomal protein uL14 family. As to quaternary structure, part of the 50S ribosomal subunit. Forms a cluster with proteins L3 and L19. In the 70S ribosome, L14 and L19 interact and together make contacts with the 16S rRNA in bridges B5 and B8.

Its function is as follows. Binds to 23S rRNA. Forms part of two intersubunit bridges in the 70S ribosome. The sequence is that of Large ribosomal subunit protein uL14 from Chlorobaculum parvum (strain DSM 263 / NCIMB 8327) (Chlorobium vibrioforme subsp. thiosulfatophilum).